We begin with the raw amino-acid sequence, 90 residues long: UPF0298 protein BLi01717/BL02989 (90 aa).

Belongs to the UPF0298 family.

The protein localises to the cytoplasm. This chain is UPF0298 protein BLi01717/BL02989, found in Bacillus licheniformis (strain ATCC 14580 / DSM 13 / JCM 2505 / CCUG 7422 / NBRC 12200 / NCIMB 9375 / NCTC 10341 / NRRL NRS-1264 / Gibson 46).